The following is a 185-amino-acid chain: Chromobox protein homolog 1 (185 aa).

Glycyl lysine isopeptide (Lys-Gly) (interchain with G-Cter in SUMO2) cross-links involve residues lysine 9 and lysine 33. Residues 21-79 form the Chromo 1 domain; that stretch reads YVVEKVLDRRVVKGKVEYLLKWKGFSDEDNTWEPEENLDCPDLIAEFLQSQKTAHETDK. The interval 63 to 124 is disordered; it reads LIAEFLQSQK…RGLEPERIIG (62 aa). A compositionally biased stretch (basic and acidic residues) spans 73–89; it reads TAHETDKSEGGKRKADS. Serine 89 and serine 91 each carry phosphoserine. The segment covering 96–121 has biased composition (basic and acidic residues); it reads EESKPKKKKEESEKPRGFARGLEPER. Glycyl lysine isopeptide (Lys-Gly) (interchain with G-Cter in SUMO2) cross-links involve residues lysine 99 and lysine 150. Residues 117 to 175 enclose the Chromo 2; shadow subtype domain; the sequence is LEPERIIGATDSSGELMFLMKWKNSDEADLVPAKEANVKCPQVVISFYEERLTWHSYPS. Residue serine 175 is modified to Phosphoserine.

In terms of assembly, homodimer. Interacts directly with CHAF1A, EMSY, LBR, TIF1/TIF1A and TRIM28/TIF1B PXVXL motif via the chromoshadow domain. Interacts directly with histone H3 methylated at 'Lys-9' via the chromo domain. Interacts with SUV39H1 and SETDB1, KMT5B and KMT5C. Interacts with PRDM6. Interacts with POGZ. Interacts with CHAMP1. Interacts with INCENP. Interacts with SGO1; the CBX1 homodimer binds to one molecule of SGO1. Interacts with LRIF1 (via PxVxL motif). Interacts with HDGFL2. Interacts with CHD3. Interacts with CHD4. Post-translationally, not phosphorylated. Ubiquitinated. In terms of tissue distribution, expressed in all adult and embryonic tissues.

It localises to the nucleus. In terms of biological role, component of heterochromatin. Recognizes and binds histone H3 tails methylated at 'Lys-9', leading to epigenetic repression. Interaction with lamin B receptor (LBR) can contribute to the association of the heterochromatin with the inner nuclear membrane. This Homo sapiens (Human) protein is Chromobox protein homolog 1 (CBX1).